We begin with the raw amino-acid sequence, 387 residues long: Protein RecA, chromosomal (387 aa).

Position 80-87 (80-87 (GPESSGKT)) interacts with ATP. The interval 352–387 (EVAETTEDTSTKAKATKAKKEEKVVETEEIELELED) is disordered. A compositionally biased stretch (acidic residues) spans 378–387 (TEEIELELED).

This sequence belongs to the RecA family.

Its subcellular location is the cytoplasm. Can catalyze the hydrolysis of ATP in the presence of single-stranded DNA, the ATP-dependent uptake of single-stranded DNA by duplex DNA, and the ATP-dependent hybridization of homologous single-stranded DNAs. It interacts with LexA causing its activation and leading to its autocatalytic cleavage. The polypeptide is Protein RecA, chromosomal (Lactococcus lactis subsp. lactis (strain IL1403) (Streptococcus lactis)).